The sequence spans 528 residues: Protein spinster homolog 1 (528 aa).

The tract at residues 1-49 (MAGSDTAPFLSQADDPDDGPVPGTPGLPGSTGNPKSEEPEVPDQEGLQR) is disordered. At A2 the chain carries N-acetylalanine. 12 consecutive transmembrane segments (helical) span residues 50–70 (ITGL…YINL), 98–118 (GLIQ…FGYL), 127–147 (LMCG…FIPG), 160–180 (VGVG…DLFV), 187–207 (MLSI…IAGS), 218–238 (WALR…FLVV), 278–298 (LGFT…PAFL), 323–343 (LIFG…GVEI), 357–377 (LVCA…LACA), 381–401 (IVAT…NWAI), 421–441 (FQIV…IGLI), and 465–485 (MLCA…AIFI). S518 is subject to Phosphoserine.

This sequence belongs to the major facilitator superfamily. Spinster (TC 2.A.1.49) family. As to quaternary structure, interacts with BCL2 and BCL2L1.

It localises to the lysosome membrane. The protein localises to the mitochondrion inner membrane. It catalyses the reaction a 1-acyl-sn-glycero-3-phosphocholine(out) + H(+)(out) = a 1-acyl-sn-glycero-3-phosphocholine(in) + H(+)(in). It carries out the reaction 1-hexadecanoyl-sn-glycero-3-phosphocholine(out) + H(+)(out) = 1-hexadecanoyl-sn-glycero-3-phosphocholine(in) + H(+)(in). The catalysed reaction is 1-(9Z-octadecenoyl)-sn-glycero-3-phosphocholine(out) + H(+)(out) = 1-(9Z-octadecenoyl)-sn-glycero-3-phosphocholine(in) + H(+)(in). The enzyme catalyses 1-(5Z,8Z,11Z,14Z-eicosatetraenoyl)-sn-glycero-3-phosphocholine(out) + H(+)(out) = 1-(5Z,8Z,11Z,14Z-eicosatetraenoyl)-sn-glycero-3-phosphocholine(in) + H(+)(in). It catalyses the reaction 1-(4Z,7Z,10Z,13Z,16Z,19Z-docosahexaenoyl)-sn-glycero-3-phosphocholine(out) + H(+)(out) = 1-(4Z,7Z,10Z,13Z,16Z,19Z-docosahexaenoyl)-sn-glycero-3-phosphocholine(in) + H(+)(in). It carries out the reaction a 1-acyl-sn-glycero-3-phosphoethanolamine(out) + H(+)(out) = a 1-acyl-sn-glycero-3-phosphoethanolamine(in) + H(+)(in). The catalysed reaction is 1-(9Z-octadecenoyl)-sn-glycero-3-phosphoethanolamine(out) + H(+)(out) = 1-(9Z-octadecenoyl)-sn-glycero-3-phosphoethanolamine(in) + H(+)(in). The enzyme catalyses 1-acyl-sn-glycero-3-phospho-(1'-sn-glycerol)(out) + H(+)(out) = 1-acyl-sn-glycero-3-phospho-(1'-sn-glycerol)(in) + H(+)(in). It catalyses the reaction 1-(9Z-octadecenoyl)-sn-glycero-3-phospho-(1'-sn-glycerol)(out) + H(+)(out) = 1-(9Z-octadecenoyl)-sn-glycero-3-phospho-(1'-sn-glycerol)(in) + H(+)(in). It carries out the reaction a 1-O-(1Z-alkenyl)-sn-glycero-3-phosphocholine(out) + H(+)(out) = a 1-O-(1Z-alkenyl)-sn-glycero-3-phosphocholine(in) + H(+)(in). The catalysed reaction is 1-(1Z-hexadecenyl)-sn-glycero-3-phosphocholine(out) + H(+)(out) = 1-(1Z-hexadecenyl)-sn-glycero-3-phosphocholine(in) + H(+)(in). The enzyme catalyses a 1-O-(1Z-alkenyl)-sn-glycero-3-phosphoethanolamine(out) + H(+)(out) = a 1-O-(1Z-alkenyl)-sn-glycero-3-phosphoethanolamine(in) + H(+)(in). It catalyses the reaction 1-O-(1Z-hexadecenyl)-sn-glycero-3-phosphoethanolamine(out) + H(+)(out) = 1-O-(1Z-hexadecenyl)-sn-glycero-3-phosphoethanolamine(in) + H(+)(in). Functionally, plays a critical role in the phospholipid salvage pathway from lysosomes to the cytosol. Mediates the rate-limiting, proton-dependent, lysosomal efflux of lysophospholipids, which can then be reacylated by acyltransferases in the endoplasmic reticulum to form phospholipids. Selective for zwitterionic headgroups such as lysophosphatidylcholine (LPC) and lysophosphatidylethanolamine (LPE), can also transport lysophosphatidylglycerol (LPG), but not other anionic lysophospholipids, sphingosine, nor sphingomyelin. Transports lysophospholipids with saturated, monounsaturated, and polyunsaturated fatty acids, such as 1-hexadecanoyl-sn-glycero-3-phosphocholine, 1-(9Z-octadecenoyl)-sn-glycero-3-phosphocholine and 1-(4Z,7Z,10Z,13Z,16Z,19Z-docosahexaenoyl)-sn-glycero-3-phosphocholine, respectively. Can also transport lysoplasmalogen (LPC with a fatty alcohol) such as 1-(1Z-hexadecenyl)-sn-glycero-3-phosphocholine. Lysosomal LPC could function as intracellular signaling messenger. Essential player in lysosomal homeostasis. Crucial for cell survival under conditions of nutrient limitation. May be involved in necrotic or autophagic cell death. This Homo sapiens (Human) protein is Protein spinster homolog 1 (SPNS1).